Reading from the N-terminus, the 59-residue chain is MAVQQNKKSPSKRGMHRSHDFLTNPALAVEPTTGEAHLRHHISPNGFYRGRKVVKAKGE.

The tract at residues 1 to 22 (MAVQQNKKSPSKRGMHRSHDFL) is disordered.

Belongs to the bacterial ribosomal protein bL32 family.

The chain is Large ribosomal subunit protein bL32 from Thiobacillus denitrificans (strain ATCC 25259 / T1).